The chain runs to 634 residues: 1-deoxy-D-xylulose-5-phosphate synthase (634 aa).

Thiamine diphosphate contacts are provided by residues H74 and 115 to 117 (AHS). D146 provides a ligand contact to Mg(2+). Thiamine diphosphate-binding positions include 147 to 148 (GA), N176, Y283, and E365. N176 contacts Mg(2+).

Belongs to the transketolase family. DXPS subfamily. In terms of assembly, homodimer. Requires Mg(2+) as cofactor. Thiamine diphosphate serves as cofactor.

The catalysed reaction is D-glyceraldehyde 3-phosphate + pyruvate + H(+) = 1-deoxy-D-xylulose 5-phosphate + CO2. It participates in metabolic intermediate biosynthesis; 1-deoxy-D-xylulose 5-phosphate biosynthesis; 1-deoxy-D-xylulose 5-phosphate from D-glyceraldehyde 3-phosphate and pyruvate: step 1/1. Functionally, catalyzes the acyloin condensation reaction between C atoms 2 and 3 of pyruvate and glyceraldehyde 3-phosphate to yield 1-deoxy-D-xylulose-5-phosphate (DXP). In Burkholderia pseudomallei (strain 668), this protein is 1-deoxy-D-xylulose-5-phosphate synthase.